The following is a 305-amino-acid chain: Glycine--tRNA ligase alpha subunit (305 aa).

It belongs to the class-II aminoacyl-tRNA synthetase family. Tetramer of two alpha and two beta subunits.

Its subcellular location is the cytoplasm. The catalysed reaction is tRNA(Gly) + glycine + ATP = glycyl-tRNA(Gly) + AMP + diphosphate. The protein is Glycine--tRNA ligase alpha subunit of Ligilactobacillus salivarius (strain UCC118) (Lactobacillus salivarius).